Here is a 1377-residue protein sequence, read N- to C-terminus: Endoribonuclease Dicer homolog 2b (1377 aa).

Over residues 1–15 the composition is skewed to gly residues; it reads MGGPLTAAGGRGDGG. The interval 1 to 30 is disordered; it reads MGGPLTAAGGRGDGGAKAVEPLRPPPPPDP. The Helicase ATP-binding domain maps to 41–222; the sequence is ALERAVRGNT…HNYSKQISEI (182 aa). Residue 54 to 61 coordinates ATP; sequence LETGSGKT. Residues 163–166 carry the DECH box motif; sequence DECH. The region spanning 388-561 is the Helicase C-terminal domain; the sequence is TLLQYRHMQD…DTYYRVESTP (174 aa). The Dicer dsRNA-binding fold domain maps to 534–626; sequence SLRLGSISCQ…LPELDVPCDE (93 aa). Positions 798–913 constitute a PAZ domain; sequence RDIDLLQTKD…LPPELCRIIM (116 aa). 2 consecutive RNase III domains span residues 940 to 1095 and 1132 to 1276; these read SVKL…STAG and VRSL…LDSK. The Mg(2+) site is built by E1171, D1262, and E1265. The region spanning 1302-1367 is the DRBM domain; that stretch reads DPVKGLQEFC…SKAVLKDLIA (66 aa).

The protein belongs to the helicase family. Dicer subfamily. As to quaternary structure, may interact with ARGONAUTE1 or PINHEAD through their common PAZ domains. The cofactor is Mg(2+). Mn(2+) is required as a cofactor.

It localises to the nucleus. In terms of biological role, probably involved in the RNA silencing pathway. May cleave double-stranded RNA to produce short 21-24 nucleotides (nt) RNAs which target the selective destruction of complementary RNAs. In Oryza sativa subsp. japonica (Rice), this protein is Endoribonuclease Dicer homolog 2b (DCL2B).